A 432-amino-acid polypeptide reads, in one-letter code: Glutamyl-tRNA reductase (432 aa).

Substrate-binding positions include 49–52 (TCNR), Ser-101, 106–108 (ESQ), and Gln-112. Cys-50 (nucleophile) is an active-site residue. 181-186 (GAGETI) is an NADP(+) binding site. The interval 410–432 (KPGYHHPTLQTTIVKTDETDPAS) is disordered.

This sequence belongs to the glutamyl-tRNA reductase family. In terms of assembly, homodimer.

The enzyme catalyses (S)-4-amino-5-oxopentanoate + tRNA(Glu) + NADP(+) = L-glutamyl-tRNA(Glu) + NADPH + H(+). It participates in porphyrin-containing compound metabolism; protoporphyrin-IX biosynthesis; 5-aminolevulinate from L-glutamyl-tRNA(Glu): step 1/2. Catalyzes the NADPH-dependent reduction of glutamyl-tRNA(Glu) to glutamate 1-semialdehyde (GSA). This chain is Glutamyl-tRNA reductase, found in Xylella fastidiosa (strain M23).